The following is a 380-amino-acid chain: Cytochrome b (380 aa).

4 helical membrane passes run 33 to 53 (FGSL…FLAM), 77 to 98 (WLIR…YLHV), 113 to 133 (WNIG…GYVL), and 178 to 198 (FFAF…LHLL). His-83 and His-97 together coordinate heme b. Heme b is bound by residues His-182 and His-196. Position 201 (His-201) interacts with a ubiquinone. Helical transmembrane passes span 226–246 (YKDL…ALFS), 288–308 (LGGV…PLLH), 320–340 (LTQI…WIGG), and 347–367 (FITV…IFIP).

Belongs to the cytochrome b family. The cytochrome bc1 complex contains 3 respiratory subunits (MT-CYB, CYC1 and UQCRFS1), 2 core proteins (UQCRC1 and UQCRC2) and probably 6 low-molecular weight proteins. Heme b is required as a cofactor.

The protein resides in the mitochondrion inner membrane. In terms of biological role, component of the ubiquinol-cytochrome c reductase complex (complex III or cytochrome b-c1 complex) that is part of the mitochondrial respiratory chain. The b-c1 complex mediates electron transfer from ubiquinol to cytochrome c. Contributes to the generation of a proton gradient across the mitochondrial membrane that is then used for ATP synthesis. The sequence is that of Cytochrome b (mt-cyb) from Neocyttus rhomboidalis (Spiky oreo dory).